The chain runs to 311 residues: Halocin-S8 (311 aa).

Propeptides lie at residues 1-230 and 267-311; these read MSDK…IQLQ and TVAC…TSFW.

It localises to the secreted. Functionally, has antibacterial activity against the haloarchaeons H.salinarium NRC817, Halobacterium GRB and H.gibbonsii. This is Halocin-S8 (halS8) from Haloarchaeon S8a.